The sequence spans 874 residues: Lon protease (874 aa).

The region spanning 18–261 is the Lon N-terminal domain; it reads LPVLPLDDAV…RLLTWTKEHL (244 aa). Disordered stretches follow at residues 47–68, 120–144, and 298–318; these read VDAARTGGSAGSSDARAPGISS, GGVRPAPAGTDTTGTGTADATSGAG, and LSELDGSGGGADGASGSEPAD. Residues 124-142 show a composition bias toward low complexity; the sequence is PAPAGTDTTGTGTADATSG. Position 430–437 (430–437) interacts with ATP; sequence GPPGVGKT. The Lon proteolytic domain maps to 667–851; that stretch reads TALPGVATGL…REVLDLALEP (185 aa). Active-site residues include Ser-757 and Lys-800. Positions 853-874 are disordered; the sequence is FDADHGGRSPGRAGHSPTALAA.

It belongs to the peptidase S16 family. In terms of assembly, homohexamer. Organized in a ring with a central cavity.

It is found in the cytoplasm. It catalyses the reaction Hydrolysis of proteins in presence of ATP.. In terms of biological role, ATP-dependent serine protease that mediates the selective degradation of mutant and abnormal proteins as well as certain short-lived regulatory proteins. Required for cellular homeostasis and for survival from DNA damage and developmental changes induced by stress. Degrades polypeptides processively to yield small peptide fragments that are 5 to 10 amino acids long. Binds to DNA in a double-stranded, site-specific manner. In Frankia alni (strain DSM 45986 / CECT 9034 / ACN14a), this protein is Lon protease.